Here is a 347-residue protein sequence, read N- to C-terminus: Elongation factor Ts (347 aa).

The interval 80-83 is involved in Mg(2+) ion dislocation from EF-Tu; the sequence is TDFV.

It belongs to the EF-Ts family.

The protein localises to the cytoplasm. Associates with the EF-Tu.GDP complex and induces the exchange of GDP to GTP. It remains bound to the aminoacyl-tRNA.EF-Tu.GTP complex up to the GTP hydrolysis stage on the ribosome. The polypeptide is Elongation factor Ts (Streptococcus gordonii (strain Challis / ATCC 35105 / BCRC 15272 / CH1 / DL1 / V288)).